The primary structure comprises 448 residues: Acetate kinase (448 aa).

Asn7 contributes to the Mg(2+) binding site. Lys14 serves as a coordination point for ATP. A substrate-binding site is contributed by Arg91. Residue Asp148 is the Proton donor/acceptor of the active site. Residues 208 to 212 and 283 to 285 contribute to the ATP site; these read HIGNG and DRR. Residue Glu388 coordinates Mg(2+).

Belongs to the acetokinase family. Homodimer. Mg(2+) is required as a cofactor. The cofactor is Mn(2+).

The protein resides in the cytoplasm. It carries out the reaction acetate + ATP = acetyl phosphate + ADP. The protein operates within metabolic intermediate biosynthesis; acetyl-CoA biosynthesis; acetyl-CoA from acetate: step 1/2. Its function is as follows. Catalyzes the formation of acetyl phosphate from acetate and ATP. Can also catalyze the reverse reaction. The polypeptide is Acetate kinase (Treponema pallidum (strain Nichols)).